A 482-amino-acid polypeptide reads, in one-letter code: ATP synthase subunit beta (482 aa).

162-169 (GGAGVGKT) is an ATP binding site.

The protein belongs to the ATPase alpha/beta chains family. In terms of assembly, F-type ATPases have 2 components, CF(1) - the catalytic core - and CF(0) - the membrane proton channel. CF(1) has five subunits: alpha(3), beta(3), gamma(1), delta(1), epsilon(1). CF(0) has four main subunits: a(1), b(1), b'(1) and c(9-12).

Its subcellular location is the cellular thylakoid membrane. It catalyses the reaction ATP + H2O + 4 H(+)(in) = ADP + phosphate + 5 H(+)(out). Its function is as follows. Produces ATP from ADP in the presence of a proton gradient across the membrane. The catalytic sites are hosted primarily by the beta subunits. The protein is ATP synthase subunit beta of Trichormus variabilis (strain ATCC 29413 / PCC 7937) (Anabaena variabilis).